Here is a 280-residue protein sequence, read N- to C-terminus: UDP-3-O-acyl-N-acetylglucosamine deacetylase (280 aa).

Zn(2+) contacts are provided by H77, H238, and D242. Catalysis depends on H265, which acts as the Proton donor.

This sequence belongs to the LpxC family. Zn(2+) is required as a cofactor.

The catalysed reaction is a UDP-3-O-[(3R)-3-hydroxyacyl]-N-acetyl-alpha-D-glucosamine + H2O = a UDP-3-O-[(3R)-3-hydroxyacyl]-alpha-D-glucosamine + acetate. The protein operates within glycolipid biosynthesis; lipid IV(A) biosynthesis; lipid IV(A) from (3R)-3-hydroxytetradecanoyl-[acyl-carrier-protein] and UDP-N-acetyl-alpha-D-glucosamine: step 2/6. In terms of biological role, catalyzes the hydrolysis of UDP-3-O-myristoyl-N-acetylglucosamine to form UDP-3-O-myristoylglucosamine and acetate, the committed step in lipid A biosynthesis. The sequence is that of UDP-3-O-acyl-N-acetylglucosamine deacetylase from Nostoc sp. (strain PCC 7120 / SAG 25.82 / UTEX 2576).